The primary structure comprises 116 residues: PTS system N,N'-diacetylchitobiose-specific EIIA component (116 aa).

Residues 15-113 enclose the PTS EIIA type-3 domain; the sequence is EELEEVVMGL…ITELIELHEK (99 aa). His-89 functions as the Tele-phosphohistidine intermediate in the catalytic mechanism. His-89 is subject to Phosphohistidine; by HPr.

As to quaternary structure, forms a complex with ChbB (EIIB). ChbA is a homotrimer. Requires Mg(2+) as cofactor.

It localises to the cytoplasm. The phosphoenolpyruvate-dependent sugar phosphotransferase system (sugar PTS), a major carbohydrate active transport system, catalyzes the phosphorylation of incoming sugar substrates concomitantly with their translocation across the cell membrane. The enzyme II ChbABC PTS system is involved in the transport of the chitin disaccharide N,N'-diacetylchitobiose (GlcNAc2). The polypeptide is PTS system N,N'-diacetylchitobiose-specific EIIA component (chbA) (Escherichia coli O157:H7).